The following is a 465-amino-acid chain: Adenosylhomocysteinase (465 aa).

Substrate-binding residues include Thr-56, Asp-131, and Glu-191. Residue 192–194 participates in NAD(+) binding; the sequence is TTT. 2 residues coordinate substrate: Lys-221 and Asp-225. NAD(+) contacts are provided by residues Asn-226, 255-260, Glu-278, Asn-313, 334-336, and Asn-379; these read GYGDVG and IGH.

Belongs to the adenosylhomocysteinase family. NAD(+) serves as cofactor.

The protein localises to the cytoplasm. It carries out the reaction S-adenosyl-L-homocysteine + H2O = L-homocysteine + adenosine. It participates in amino-acid biosynthesis; L-homocysteine biosynthesis; L-homocysteine from S-adenosyl-L-homocysteine: step 1/1. In terms of biological role, may play a key role in the regulation of the intracellular concentration of adenosylhomocysteine. This chain is Adenosylhomocysteinase, found in Chelativorans sp. (strain BNC1).